Reading from the N-terminus, the 496-residue chain is 1-aminocyclopropane-1-carboxylate synthase 4 (496 aa).

An N6-(pyridoxal phosphate)lysine modification is found at K300.

The protein belongs to the class-I pyridoxal-phosphate-dependent aminotransferase family. It depends on pyridoxal 5'-phosphate as a cofactor. As to expression, expressed in leaves. Expressed in shoots and leaf blades. Expressed at low levels in leaf sheaths.

It carries out the reaction S-adenosyl-L-methionine = 1-aminocyclopropane-1-carboxylate + S-methyl-5'-thioadenosine + H(+). Its pathway is alkene biosynthesis; ethylene biosynthesis via S-adenosyl-L-methionine; ethylene from S-adenosyl-L-methionine: step 1/2. In terms of biological role, catalyzes the formation of 1-aminocyclopropane-1-carboxylate, a direct precursor of ethylene in higher plants. The polypeptide is 1-aminocyclopropane-1-carboxylate synthase 4 (Oryza sativa subsp. japonica (Rice)).